Reading from the N-terminus, the 647-residue chain is DNA topoisomerase 4 subunit B (647 aa).

Residues Tyr11, Asn51, Asp78, 118-124, and Lys344 contribute to the ATP site; that span reads GLHGVGS. Positions 391-401 are enriched in basic and acidic residues; sequence AARKARDESRN. The segment at 391–421 is disordered; that stretch reads AARKARDESRNGKKNKKDKGLLSGKLTPAQS. In terms of domain architecture, Toprim spans 427–541; that stretch reads NELYLVEGDS…AGHVYIALPP (115 aa). Glu433, Asp506, and Asp508 together coordinate Mg(2+).

This sequence belongs to the type II topoisomerase family. ParE type 2 subfamily. Heterotetramer composed of ParC and ParE. It depends on Mg(2+) as a cofactor. Mn(2+) serves as cofactor. The cofactor is Ca(2+).

It carries out the reaction ATP-dependent breakage, passage and rejoining of double-stranded DNA.. With respect to regulation, inhibited by quinolones, such as levofloxacin. Topoisomerase IV is essential for chromosome segregation. It relaxes supercoiled DNA. Performs the decatenation events required during the replication of a circular DNA molecule. In Streptococcus pneumoniae serotype 4 (strain ATCC BAA-334 / TIGR4), this protein is DNA topoisomerase 4 subunit B.